Here is a 456-residue protein sequence, read N- to C-terminus: Chromosomal replication initiator protein DnaA (456 aa).

Residues 1-83 (MTASLWQQCL…LRFDIGNRPH (83 aa)) form a domain I, interacts with DnaA modulators region. The segment at 83–119 (HPVAIARAPARGAAPVNNLQKSWESKADAKPEPNHKS) is domain II. A domain III, AAA+ region region spans residues 120–336 (NTNVNYTFEN…GALNRVIANA (217 aa)). The ATP site is built by G164, G166, K167, and T168. The tract at residues 337-456 (NFTGRAINID…YSNLIRTLSS (120 aa)) is domain IV, binds dsDNA.

It belongs to the DnaA family. In terms of assembly, oligomerizes as a right-handed, spiral filament on DNA at oriC.

It localises to the cytoplasm. Functionally, plays an essential role in the initiation and regulation of chromosomal replication. ATP-DnaA binds to the origin of replication (oriC) to initiate formation of the DNA replication initiation complex once per cell cycle. Binds the DnaA box (a 9 base pair repeat at the origin) and separates the double-stranded (ds)DNA. Forms a right-handed helical filament on oriC DNA; dsDNA binds to the exterior of the filament while single-stranded (ss)DNA is stabiized in the filament's interior. The ATP-DnaA-oriC complex binds and stabilizes one strand of the AT-rich DNA unwinding element (DUE), permitting loading of DNA polymerase. After initiation quickly degrades to an ADP-DnaA complex that is not apt for DNA replication. Binds acidic phospholipids. The sequence is that of Chromosomal replication initiator protein DnaA from Aeromonas salmonicida (strain A449).